A 382-amino-acid chain; its full sequence is Galactokinase (382 aa).

34–37 contributes to the substrate binding site; sequence EHTD. ATP is bound at residue 124–130; that stretch reads GAGLSSS. Serine 130 and glutamate 162 together coordinate Mg(2+). Aspartate 174 acts as the Proton acceptor in catalysis. Tyrosine 223 serves as a coordination point for substrate.

Belongs to the GHMP kinase family. GalK subfamily.

The protein resides in the cytoplasm. It catalyses the reaction alpha-D-galactose + ATP = alpha-D-galactose 1-phosphate + ADP + H(+). Its pathway is carbohydrate metabolism; galactose metabolism. Its function is as follows. Catalyzes the transfer of the gamma-phosphate of ATP to D-galactose to form alpha-D-galactose-1-phosphate (Gal-1-P). The protein is Galactokinase of Salmonella arizonae (strain ATCC BAA-731 / CDC346-86 / RSK2980).